We begin with the raw amino-acid sequence, 520 residues long: Cytochrome P450 315a1, mitochondrial (520 aa).

C466 provides a ligand contact to heme.

This sequence belongs to the cytochrome P450 family. The cofactor is heme. In terms of tissue distribution, complex coexpression pattern of dib (disembodied) and sad (shade) in the early embryo that restricts to the prothoracic gland cells of the developing ring gland during late embryogenesis. In larvae and adult, coexpression is seen in prothoracic gland and follicle cells of the ovary. In adults, coexpression is seen in the follicle cells, sad only is expressed in nurse cells.

The protein localises to the mitochondrion membrane. The catalysed reaction is 2-deoxyecdysone + 2 reduced [adrenodoxin] + O2 + 2 H(+) = ecdysone + 2 oxidized [adrenodoxin] + H2O. It catalyses the reaction 2,22-dideoxyecdysone + 2 reduced [adrenodoxin] + O2 + 2 H(+) = 22-deoxyecdysone + 2 oxidized [adrenodoxin] + H2O. It participates in steroid biosynthesis; ecdysteroid biosynthesis. Its function is as follows. Required for CNS development: midline glial cells. Involved in the metabolism of insect hormones: responsible for ecdysteroid C2-hydroxylase activity. May be involved in the breakdown of synthetic insecticides. The protein is Cytochrome P450 315a1, mitochondrial of Drosophila melanogaster (Fruit fly).